Reading from the N-terminus, the 971-residue chain is Exportin-2 (971 aa).

Methionine 1 carries the N-acetylmethionine modification. Residues alanine 29 to serine 102 form the Importin N-terminal domain. Residue serine 112 is modified to Phosphoserine. 2 positions are modified to N6-acetyllysine: lysine 574 and lysine 824. At serine 931 the chain carries Phosphoserine.

This sequence belongs to the XPO2/CSE1 family. Found in a complex with CSE1L/XPO2, Ran and KPNA2. Binds with high affinity to importin-alpha only in the presence of RanGTP. The complex is dissociated by the combined action of RanBP1 and RanGAP1. Interacts with CFTR.

The protein localises to the cytoplasm. Its subcellular location is the nucleus. In terms of biological role, export receptor for importin-alpha. Mediates importin-alpha re-export from the nucleus to the cytoplasm after import substrates (cargos) have been released into the nucleoplasm. In the nucleus binds cooperatively to importin-alpha and to the GTPase Ran in its active GTP-bound form. Docking of this trimeric complex to the nuclear pore complex (NPC) is mediated through binding to nucleoporins. Upon transit of a nuclear export complex into the cytoplasm, disassembling of the complex and hydrolysis of Ran-GTP to Ran-GDP (induced by RANBP1 and RANGAP1, respectively) cause release of the importin-alpha from the export receptor. CSE1L/XPO2 then return to the nuclear compartment and mediate another round of transport. The directionality of nuclear export is thought to be conferred by an asymmetric distribution of the GTP- and GDP-bound forms of Ran between the cytoplasm and nucleus. This Pongo abelii (Sumatran orangutan) protein is Exportin-2 (CSE1L).